A 1316-amino-acid chain; its full sequence is DNA-directed RNA polymerase subunit beta' (1316 aa).

Zn(2+)-binding residues include Cys-60, Cys-62, Cys-75, and Cys-78. Mg(2+) is bound by residues Asp-535, Asp-537, and Asp-539. Cys-891, Cys-968, Cys-975, and Cys-978 together coordinate Zn(2+).

The protein belongs to the RNA polymerase beta' chain family. As to quaternary structure, the RNAP catalytic core consists of 2 alpha, 1 beta, 1 beta' and 1 omega subunit. When a sigma factor is associated with the core the holoenzyme is formed, which can initiate transcription. Mg(2+) is required as a cofactor. The cofactor is Zn(2+).

The enzyme catalyses RNA(n) + a ribonucleoside 5'-triphosphate = RNA(n+1) + diphosphate. Functionally, DNA-dependent RNA polymerase catalyzes the transcription of DNA into RNA using the four ribonucleoside triphosphates as substrates. In Mycolicibacterium paratuberculosis (strain ATCC BAA-968 / K-10) (Mycobacterium paratuberculosis), this protein is DNA-directed RNA polymerase subunit beta'.